Consider the following 1081-residue polypeptide: FHIP family protein GA25918 (1081 aa).

Positions 1 to 11 are enriched in polar residues; the sequence is MSWLRSSPLRQ. 5 disordered regions span residues 1–31, 504–524, 650–685, 830–913, and 933–1027; these read MSWLRSSPLRQSGNGGGGGVSTGHSSTGSLR, ARPKSVHEQQAPSGATGEQPI, ADEESDATDLTVTTTTASEADLEHNSSSVSSGMGGG, NENS…AASS, and NNNN…SEPA. The residue at position 508 (S508) is a Phosphoserine. Over residues 657 to 668 the composition is skewed to low complexity; it reads TDLTVTTTTASE. At S833 the chain carries Phosphoserine. Low complexity predominate over residues 840-856; the sequence is QPQTTLSQQQQQQQGQQ. Over residues 857–876 the composition is skewed to polar residues; that stretch reads RSAYATLSAATPVQATQTSA. Low complexity-rich tracts occupy residues 891-913 and 933-953; these read SKSISSMFSRRSTPNPPSSAASS and NNNNSGSGGQSQPFSSTGTGT. Residues 954–963 are compositionally biased toward polar residues; the sequence is CETSLSTNPQ. The span at 964–993 shows a compositional bias: low complexity; sequence SGAAAARSTGTATTANGNSSNSNISIGGST. Residues 994–1010 show a composition bias toward polar residues; the sequence is QTLSGHSNTTTYSSSTL.

The protein belongs to the FHIP family.

In Drosophila pseudoobscura pseudoobscura (Fruit fly), this protein is FHIP family protein GA25918.